The primary structure comprises 1682 residues: Calmodulin-binding transcription activator 1 (1682 aa).

The CG-1 DNA-binding region spans 63–188 (KCSSLPKERH…YLNVPAIEDC (126 aa)). A Nuclear localization signal motif is present at residues 112 to 119 (RKKVKYRK). Disordered stretches follow at residues 284–375 (RIIS…MVDS) and 599–622 (SSFS…FLQD). A compositionally biased stretch (basic and acidic residues) spans 302–327 (EVQHNDVSEGKHEPSHGRSTSREKRN). Polar residues-rich tracts occupy residues 337–367 (HQNS…SGLN) and 599–618 (SSFS…SPSF). The region spanning 877–955 (DYSPEWSYPE…ISNSVVFEYK (79 aa)) is the IPT/TIG domain. The disordered stretch occupies residues 992-1020 (MAEMTGSQQHKQASGGGGSGSGSGSGAGG). Positions 1005 to 1020 (SGGGGSGSGSGSGAGG) are enriched in gly residues. ANK repeat units lie at residues 1066 to 1095 (RGMT…KHAD), 1111 to 1141 (FSCT…AISI), and 1145 to 1174 (LGRL…DEQA). 2 disordered regions span residues 1217–1249 (ASTN…KKHK) and 1267–1318 (LSLE…SASQ). Positions 1268-1291 (SLEQPNIRKQSPRSKQPSPETISP) are enriched in polar residues. The span at 1308-1318 (ETAASQASASQ) shows a compositional bias: low complexity. 3 IQ domains span residues 1549 to 1585 (QEVA…AAIL), 1586 to 1608 (IQSK…AAVL), and 1609 to 1631 (IQNF…TAVI).

It belongs to the CAMTA family. As to quaternary structure, may interact with calmodulin.

Its subcellular location is the nucleus. It is found in the cytoplasm. In terms of biological role, transcriptional activator. The protein is Calmodulin-binding transcription activator 1 of Mus musculus (Mouse).